The chain runs to 513 residues: Noroxomaritidine synthase 1 (513 aa).

Residues I18–A34 form a helical membrane-spanning segment. A heme-binding site is contributed by C458.

Belongs to the cytochrome P450 family. Heme serves as cofactor. Mostly expressed in stems, and, to a lower extent, in bulbs, roots, leaves and flowers.

It is found in the membrane. It carries out the reaction 4'-O-methylnorbelladine + reduced [NADPH--hemoprotein reductase] + O2 = (10bR,4aS)-noroxomaritidine + oxidized [NADPH--hemoprotein reductase] + 2 H2O + H(+). The enzyme catalyses 4'-O-methylnorbelladine + reduced [NADPH--hemoprotein reductase] + O2 = (10bS,4aR)-noroxomaritidine + oxidized [NADPH--hemoprotein reductase] + 2 H2O + H(+). The protein operates within alkaloid biosynthesis. In terms of biological role, cytochrome P450 that catalyzes an intramolecular para-para' C-C phenol coupling of 4'-O-methylnorbelladine in alkaloids biosynthesis, including haemanthamine- and crinamine-type alkaloids, promising anticancer agents. Catalyzes the formation of (10bR,4aS)-noroxomaritidine and (10bS,4aR)-noroxomaritidine from 4'-O-methylnorbelladine. The sequence is that of Noroxomaritidine synthase 1 from Narcissus pseudonarcissus (Daffodil).